We begin with the raw amino-acid sequence, 192 residues long: Large ribosomal subunit protein uL5 (192 aa).

Belongs to the universal ribosomal protein uL5 family. In terms of assembly, part of the 50S ribosomal subunit; part of the 5S rRNA/L5/L18/L25 subcomplex. Contacts the 5S rRNA and the P site tRNA. Forms a bridge to the 30S subunit in the 70S ribosome.

In terms of biological role, this is one of the proteins that bind and probably mediate the attachment of the 5S RNA into the large ribosomal subunit, where it forms part of the central protuberance. In the 70S ribosome it contacts protein S13 of the 30S subunit (bridge B1b), connecting the 2 subunits; this bridge is implicated in subunit movement. Contacts the P site tRNA; the 5S rRNA and some of its associated proteins might help stabilize positioning of ribosome-bound tRNAs. The polypeptide is Large ribosomal subunit protein uL5 (Sphingopyxis alaskensis (strain DSM 13593 / LMG 18877 / RB2256) (Sphingomonas alaskensis)).